Here is a 379-residue protein sequence, read N- to C-terminus: Chaperone protein DnaJ (379 aa).

Residues 5 to 70 form the J domain; sequence DFYEVLGVSR…QKRSAYDQYG (66 aa). The CR-type zinc finger occupies 134 to 212; the sequence is GCDKEIEVPT…CHGEGRVHKT (79 aa). Residues Cys147, Cys150, Cys164, Cys167, Cys186, Cys189, Cys200, and Cys203 each coordinate Zn(2+). CXXCXGXG motif repeat units lie at residues 147–154, 164–171, 186–193, and 200–207; these read CDPCEGTG, CSTCHGQG, CPTCHGKG, and CNSCHGEG.

Belongs to the DnaJ family. As to quaternary structure, homodimer. The cofactor is Zn(2+).

It is found in the cytoplasm. Participates actively in the response to hyperosmotic and heat shock by preventing the aggregation of stress-denatured proteins and by disaggregating proteins, also in an autonomous, DnaK-independent fashion. Unfolded proteins bind initially to DnaJ; upon interaction with the DnaJ-bound protein, DnaK hydrolyzes its bound ATP, resulting in the formation of a stable complex. GrpE releases ADP from DnaK; ATP binding to DnaK triggers the release of the substrate protein, thus completing the reaction cycle. Several rounds of ATP-dependent interactions between DnaJ, DnaK and GrpE are required for fully efficient folding. Also involved, together with DnaK and GrpE, in the DNA replication of plasmids through activation of initiation proteins. This Aliivibrio fischeri (strain ATCC 700601 / ES114) (Vibrio fischeri) protein is Chaperone protein DnaJ.